The primary structure comprises 78 residues: Small ribosomal subunit protein bS16 (78 aa).

It belongs to the bacterial ribosomal protein bS16 family.

The chain is Small ribosomal subunit protein bS16 from Thermodesulfovibrio yellowstonii (strain ATCC 51303 / DSM 11347 / YP87).